We begin with the raw amino-acid sequence, 332 residues long: Serpentine receptor class alpha-10 (332 aa).

Over 1–26 (MTSSNISICATEDQMVLQTSLLLRVN) the chain is Extracellular. Residues 27-47 (VILMTTVAIFTFVLTYRALFI) form a helical membrane-spanning segment. Topologically, residues 48–64 (LKQRPIFHKSTKILLYT) are cytoplasmic. Residues 65–85 (SLIFVNIHEIIFMVIQCVAFI) form a helical membrane-spanning segment. At 86–109 (RSFTLSDKPCEIMRTTLECRFKNH) the chain is on the extracellular side. A helical transmembrane segment spans residues 110-132 (VLIFGIAGMNFNQFGLTVDRLLA). Over 133–146 (TVIPQTYSHLGSFP) the chain is Cytoplasmic. The helical transmembrane segment at 147–167 (GILISILVIGCSIAAPLIIAI) threads the bilayer. Over 168–191 (GDPYDDIVPNCFFFPQHSAPRANV) the chain is Extracellular. The chain crosses the membrane as a helical span at residues 192-212 (FLIILSALVIASIFLNLIIIF). Over 213-239 (ANKKLEKGTRYYVSQRYQKREALISTR) the chain is Cytoplasmic. The chain crosses the membrane as a helical span at residues 240–260 (IIVYIAASQFLGMVLYSTIVL). Residues 261 to 276 (TLRLHKSMIPVSMYHN) lie on the Extracellular side of the membrane. Residues 277 to 297 (IVWWAYTVPFAAVALPALLIH) form a helical membrane-spanning segment. The Cytoplasmic segment spans residues 298–332 (RINLVGSNRKRVINRITAKVETQEEHMKSLKELWG).

Belongs to the nematode receptor-like protein sra family.

Its subcellular location is the membrane. In Caenorhabditis briggsae, this protein is Serpentine receptor class alpha-10.